Consider the following 193-residue polypeptide: Cysteine and glycine-rich protein 2 (193 aa).

Residues 10-61 form the LIM zinc-binding 1 domain; it reads CGACGRTVYHAEEVQCDGRSFHRCCFLCMVCRKNLDSTTVAIHDEEIYCKSC. The Nuclear localization signal signature appears at 64–69; that stretch reads KKYGPK. A Glycyl lysine isopeptide (Lys-Gly) (interchain with G-Cter in SUMO2) cross-link involves residue Lys91. Lys112 and Lys131 each carry N6-acetyllysine. Residues 119-170 form the LIM zinc-binding 2 domain; sequence CSRCGDSVYAAEKIIGAGKPWHKNCFRCAKCGKSLESTTLTEKEGEIYCKGC. Position 137 is an N6-acetyllysine; alternate (Lys137). Lys137 is subject to N6-succinyllysine; alternate. Lys161 carries the N6-acetyllysine modification.

Interacts with KAT14. The LIM domain 1 is necessary and sufficient for this interaction. Interacts with GLRX3.

It localises to the nucleus. In terms of biological role, drastically down-regulated in response to PDGF-BB or cell injury, that promote smooth muscle cell proliferation and dedifferentiation. Seems to play a role in the development of the embryonic vascular system. The protein is Cysteine and glycine-rich protein 2 (Csrp2) of Mus musculus (Mouse).